The following is a 100-amino-acid chain: Urease subunit gamma (100 aa).

This sequence belongs to the urease gamma subunit family. Heterotrimer of UreA (gamma), UreB (beta) and UreC (alpha) subunits. Three heterotrimers associate to form the active enzyme.

The protein resides in the cytoplasm. The catalysed reaction is urea + 2 H2O + H(+) = hydrogencarbonate + 2 NH4(+). It participates in nitrogen metabolism; urea degradation; CO(2) and NH(3) from urea (urease route): step 1/1. The sequence is that of Urease subunit gamma from Prochlorococcus marinus subsp. pastoris (strain CCMP1986 / NIES-2087 / MED4).